Here is a 98-residue protein sequence, read N- to C-terminus: uncharacterized protein (98 aa).

Residues 1–63 (MPRDKKLVHR…NGHSQPAIVA (63 aa)) form a disordered region. Acidic residues predominate over residues 14-29 (DVEDEDNDQREEEWSD). A compositionally biased stretch (polar residues) spans 48-57 (EPSSASNGHS).

This is an uncharacterized protein from Aedes vexans (Inland floodwater mosquito).